Here is a 93-residue protein sequence, read N- to C-terminus: DNA/RNA-binding protein Alba (93 aa).

Lysine 11 carries the N6-acetyllysine modification.

Belongs to the histone-like Alba family. Post-translationally, acetylated. Acetylation at Lys-11 decreases DNA-binding affinity.

The protein resides in the cytoplasm. The protein localises to the chromosome. Functionally, binds double-stranded DNA tightly but without sequence specificity. Involved in DNA compaction. This is DNA/RNA-binding protein Alba from Pyrococcus furiosus (strain ATCC 43587 / DSM 3638 / JCM 8422 / Vc1).